Reading from the N-terminus, the 204-residue chain is Outer-membrane lipoprotein LolB (204 aa).

Residues 1–16 (MLRHLLVFSLIALLAG) form the signal peptide. Cys-17 carries N-palmitoyl cysteine lipidation. A lipid anchor (S-diacylglycerol cysteine) is attached at Cys-17.

It belongs to the LolB family. In terms of assembly, monomer.

The protein resides in the cell outer membrane. Functionally, plays a critical role in the incorporation of lipoproteins in the outer membrane after they are released by the LolA protein. In Ectopseudomonas mendocina (strain ymp) (Pseudomonas mendocina), this protein is Outer-membrane lipoprotein LolB.